A 207-amino-acid chain; its full sequence is MLAAQLDSYLADMQMTATPKQKQQLLDFVAMLAKWNKAYNLTSVRDPEQMLIRHIMDSLAASPHLVGERFIDVGTGPGLPGIPLAIMNPDKEFVLLDSLGKRIRFQKQVQFELAIGNISSVESRVEAYQPEEKFDGVLSRAFASIQDMLQWCHHLPKPTGCFYALKGQLSDEEMANMPEGFTLTDVFELKVPRLDEQRHLLRVVKAA.

S-adenosyl-L-methionine is bound by residues Gly74, Leu79, 125–126, and Arg140; that span reads VE.

It belongs to the methyltransferase superfamily. RNA methyltransferase RsmG family.

The protein localises to the cytoplasm. It carries out the reaction guanosine(527) in 16S rRNA + S-adenosyl-L-methionine = N(7)-methylguanosine(527) in 16S rRNA + S-adenosyl-L-homocysteine. In terms of biological role, specifically methylates the N7 position of guanine in position 527 of 16S rRNA. The chain is Ribosomal RNA small subunit methyltransferase G from Shewanella loihica (strain ATCC BAA-1088 / PV-4).